The following is a 202-amino-acid chain: Proteasome subunit beta 1 (202 aa).

A propeptide (removed in mature form; by autocatalysis) is located at residue Met-1. Thr-2 functions as the Nucleophile in the catalytic mechanism.

The protein belongs to the peptidase T1B family. The 20S proteasome core is composed of 14 alpha and 14 beta subunits that assemble into four stacked heptameric rings, resulting in a barrel-shaped structure. The two inner rings, each composed of seven catalytic beta subunits, are sandwiched by two outer rings, each composed of seven alpha subunits. The catalytic chamber with the active sites is on the inside of the barrel. Has a gated structure, the ends of the cylinder being occluded by the N-termini of the alpha-subunits. Is capped at one or both ends by the proteasome regulatory ATPase, PAN.

The protein resides in the cytoplasm. The enzyme catalyses Cleavage of peptide bonds with very broad specificity.. Its activity is regulated as follows. The formation of the proteasomal ATPase PAN-20S proteasome complex, via the docking of the C-termini of PAN into the intersubunit pockets in the alpha-rings, triggers opening of the gate for substrate entry. Interconversion between the open-gate and close-gate conformations leads to a dynamic regulation of the 20S proteasome proteolysis activity. In terms of biological role, component of the proteasome core, a large protease complex with broad specificity involved in protein degradation. The protein is Proteasome subunit beta 1 of Pyrobaculum aerophilum (strain ATCC 51768 / DSM 7523 / JCM 9630 / CIP 104966 / NBRC 100827 / IM2).